The chain runs to 130 residues: Small ribosomal subunit protein uS9 (130 aa).

The protein belongs to the universal ribosomal protein uS9 family.

The polypeptide is Small ribosomal subunit protein uS9 (Shewanella amazonensis (strain ATCC BAA-1098 / SB2B)).